Reading from the N-terminus, the 726-residue chain is Long-chain-fatty-acid--CoA ligase ACSBG1 (726 aa).

The interval 1–39 (MPDSRAAPQESLLDASLGTTQENVGTSSLTDGQTLSKEP) is disordered. Residues 17-36 (LGTTQENVGTSSLTDGQTLS) are compositionally biased toward polar residues. A Phosphoserine modification is found at S36. Position 641 is a phosphotyrosine (Y641). Residues 707-726 (SKQGSSLPGFSLRWQTGASS) are disordered.

This sequence belongs to the ATP-dependent AMP-binding enzyme family. Bubblegum subfamily.

It localises to the cytoplasm. Its subcellular location is the cytoplasmic vesicle. The protein localises to the microsome. The protein resides in the endoplasmic reticulum. It is found in the cell membrane. The enzyme catalyses a long-chain fatty acid + ATP + CoA = a long-chain fatty acyl-CoA + AMP + diphosphate. It carries out the reaction (E)-hexadec-2-enoate + ATP + CoA = (2E)-hexadecenoyl-CoA + AMP + diphosphate. It catalyses the reaction hexadecanoate + ATP + CoA = hexadecanoyl-CoA + AMP + diphosphate. Catalyzes the conversion of fatty acids such as long-chain and very long-chain fatty acids to their active form acyl-CoAs for both synthesis of cellular lipids, and degradation via beta-oxidation. Can activate diverse saturated, monosaturated and polyunsaturated fatty acids. This is Long-chain-fatty-acid--CoA ligase ACSBG1 from Bos taurus (Bovine).